We begin with the raw amino-acid sequence, 379 residues long: Mannan endo-1,4-beta-mannosidase 7 (379 aa).

Tryptophan 64 and asparagine 179 together coordinate substrate. Glutamate 180 serves as the catalytic Proton donor. A substrate-binding site is contributed by tyrosine 260. The Nucleophile role is filled by glutamate 300. Tryptophan 342 provides a ligand contact to substrate.

Belongs to the glycosyl hydrolase 5 (cellulase A) family. Expression not detected.

It catalyses the reaction Random hydrolysis of (1-&gt;4)-beta-D-mannosidic linkages in mannans, galactomannans and glucomannans.. In Oryza sativa subsp. japonica (Rice), this protein is Mannan endo-1,4-beta-mannosidase 7 (MAN7).